We begin with the raw amino-acid sequence, 494 residues long: PIGF/3-ketodihydrosphingosine reductase fusion protein (494 aa).

NADPH contacts are provided by G20, S22, and G24. A GXSXG motif is present at residues 20–24 (GGSQG). An NADP(+)-binding site is contributed by L25. 2 residues coordinate NADPH: R45 and K49. Residue V54 coordinates NADP(+). Residues D74 and L75 each coordinate NADPH. The helical transmembrane segment at 148–168 (ILLVGSLLSSLPIIGYSAYSP) threads the bilayer. NADP(+)-binding residues include Y166, K170, and I199. The Proton acceptor role is filled by Y166. K170 serves as the catalytic Lowers pKa of active site Tyr. 6 helical membrane passes run 264-284 (HDNP…WPFY), 312-332 (IFTL…LNCL), 370-390 (LAGA…LVAF), 402-422 (YFCA…TLAF), 444-464 (LRSW…PLDW), and 473-493 (ITIV…GEIL).

This sequence in the N-terminal section; belongs to the short-chain dehydrogenases/reductases (SDR) family. It in the C-terminal section; belongs to the PIGF family.

Its subcellular location is the endoplasmic reticulum membrane. It catalyses the reaction sphinganine + NADP(+) = 3-oxosphinganine + NADPH + H(+). The protein operates within glycolipid biosynthesis; glycosylphosphatidylinositol-anchor biosynthesis. Its pathway is lipid metabolism; sphingolipid metabolism. Acts in the GPI biosynthetic pathway between GlcNAc-PI synthesis and GPI transfer to protein. Required for the formation of complete GPI precursors CP1 and CP2. In terms of biological role, catalyzes the reduction of 3'-oxosphinganine (3-ketodihydrosphingosine/KDS) to sphinganine (dihydrosphingosine/DHS), the second step of de novo sphingolipid biosynthesis. The chain is PIGF/3-ketodihydrosphingosine reductase fusion protein from Schizosaccharomyces pombe (strain 972 / ATCC 24843) (Fission yeast).